A 40-amino-acid chain; its full sequence is Lucifensin (40 aa).

Disulfide bonds link Cys3–Cys30, Cys16–Cys36, and Cys20–Cys38.

Belongs to the invertebrate defensin family. Type 1 subfamily. Post-translationally, the disulfide bonds are essential for antimicrobial activity. Larval fat body, hemolymph and salivary glands (at protein level).

The protein localises to the secreted. Functionally, shows strong antibacterial activity against the Gram-positive bacterium M.luteus. Also shows antibacterial activity against the Gram-positive bacteria E.fecalis, S.aureus, S.carnosus, S.pneumoniae and S.pyogenes and against a number of methicillin-resistant S.aureus and glycopeptide-intermediate S.aureus isolates. Does not show antibacterial activity against Gram-negative bacteria or antifungal activity against C.utilis. Shows slight antifungal activity against C.albicans. This is Lucifensin from Lucilia cuprina (Green bottle fly).